Reading from the N-terminus, the 155-residue chain is Small ribosomal subunit protein uS10m (155 aa).

Belongs to the universal ribosomal protein uS10 family. As to quaternary structure, component of the mitochondrial ribosome small subunit (28S) which comprises a 12S rRNA and about 30 distinct proteins.

It localises to the mitochondrion. This chain is Small ribosomal subunit protein uS10m (Mrps10), found in Rattus norvegicus (Rat).